A 339-amino-acid polypeptide reads, in one-letter code: Dihydroorotase (339 aa).

Residues histidine 12 and histidine 14 each contribute to the Zn(2+) site. Substrate is bound by residues 14 to 16 and asparagine 40; that span reads HVR. Lysine 94, histidine 133, histidine 167, and aspartate 239 together coordinate Zn(2+). Lysine 94 carries the N6-carboxylysine modification. Residue histidine 133 coordinates substrate. Aspartate 239 is an active-site residue. The substrate site is built by histidine 243 and alanine 255.

The protein belongs to the metallo-dependent hydrolases superfamily. DHOase family. Class II DHOase subfamily. Homodimer. It depends on Zn(2+) as a cofactor.

It catalyses the reaction (S)-dihydroorotate + H2O = N-carbamoyl-L-aspartate + H(+). Its pathway is pyrimidine metabolism; UMP biosynthesis via de novo pathway; (S)-dihydroorotate from bicarbonate: step 3/3. Functionally, catalyzes the reversible cyclization of carbamoyl aspartate to dihydroorotate. The protein is Dihydroorotase of Helicobacter pylori (strain ATCC 700392 / 26695) (Campylobacter pylori).